Here is a 349-residue protein sequence, read N- to C-terminus: Leucine-rich repeat-containing protein 58 (349 aa).

LRR repeat units follow at residues N14–K34, D35–F56, H58–T80, K81–G102, R105–Q125, T128–L149, S151–P173, Y174–V195, S197–L217, and Q219–T239.

This Xenopus tropicalis (Western clawed frog) protein is Leucine-rich repeat-containing protein 58 (lrrc58).